A 262-amino-acid polypeptide reads, in one-letter code: MLKIADTTFTSRLFTGTGKFATAELMLEALRASGSQLITMAMKRVDLQAGNDAILAPLRQLGVRLLPNTSGAKTAQEAVFAARLAREALGTHWVKLEIHPDVKYLLPDPIETLKAAEILVKEGFVVLPYCGADPVLCKRLEEAGCAAVMPLGAPIGSNLGLRTRDFLQIIIAQAKVPVVVDAGIGAPSHALEAIELGADAVLVNTAIAVARSPVKMAHAFRLAVESGELACQAGLGNRQFDRAIATSPLTGFLSQLEEENHV.

K95 (schiff-base intermediate with DXP) is an active-site residue. Residues G156, 182–183 (AG), and 204–205 (NT) contribute to the 1-deoxy-D-xylulose 5-phosphate site.

This sequence belongs to the ThiG family. Homotetramer. Forms heterodimers with either ThiH or ThiS.

Its subcellular location is the cytoplasm. It carries out the reaction [ThiS sulfur-carrier protein]-C-terminal-Gly-aminoethanethioate + 2-iminoacetate + 1-deoxy-D-xylulose 5-phosphate = [ThiS sulfur-carrier protein]-C-terminal Gly-Gly + 2-[(2R,5Z)-2-carboxy-4-methylthiazol-5(2H)-ylidene]ethyl phosphate + 2 H2O + H(+). It participates in cofactor biosynthesis; thiamine diphosphate biosynthesis. Functionally, catalyzes the rearrangement of 1-deoxy-D-xylulose 5-phosphate (DXP) to produce the thiazole phosphate moiety of thiamine. Sulfur is provided by the thiocarboxylate moiety of the carrier protein ThiS. In vitro, sulfur can be provided by H(2)S. The sequence is that of Thiazole synthase from Yersinia enterocolitica serotype O:8 / biotype 1B (strain NCTC 13174 / 8081).